A 1308-amino-acid chain; its full sequence is D-lysergyl-peptide-synthetase subunit 2 (1308 aa).

The interval 261 to 658 is adenylation (A) domain; the sequence is EWCRRTPSAV…CRKSTQVKLR (398 aa). The 69-residue stretch at 803-871 folds into the Carrier domain; that stretch reads IEEAFQRFFA…ELSELARHTK (69 aa). The residue at position 835 (S835) is an O-(pantetheine 4'-phosphoryl)serine. The segment at 910 to 1299 is condensation (C) domain; the sequence is EDVYPCTPLQ…HAAPRTLIGD (390 aa).

It belongs to the NRP synthetase family.

The protein operates within alkaloid biosynthesis; ergot alkaloid biosynthesis. In terms of biological role, D-lysergyl-peptide-synthetase subunit 2; part of the gene cluster that mediates the biosynthesis of fungal ergot alkaloid. DmaW catalyzes the first step of ergot alkaloid biosynthesis by condensing dimethylallyl diphosphate (DMAP) and tryptophan to form 4-dimethylallyl-L-tryptophan. The second step is catalyzed by the methyltransferase easF that methylates 4-dimethylallyl-L-tryptophan in the presence of S-adenosyl-L-methionine, resulting in the formation of 4-dimethylallyl-L-abrine. The catalase easC and the FAD-dependent oxidoreductase easE then transform 4-dimethylallyl-L-abrine to chanoclavine-I which is further oxidized by EasD in the presence of NAD(+), resulting in the formation of chanoclavine-I aldehyde. Agroclavine dehydrogenase easG then mediates the conversion of chanoclavine-I aldehyde to agroclavine via a non-enzymatic adduct reaction: the substrate is an iminium intermediate that is formed spontaneously from chanoclavine-I aldehyde in the presence of glutathione. The presence of easA is not required to complete this reaction. Further conversion of agroclavine to paspalic acid is a two-step process involving oxidation of agroclavine to elymoclavine and of elymoclavine to paspalic acid, the second step being performed by the elymoclavine oxidase cloA. Paspalic acid is then further converted to D-lysergic acid. Ergopeptines are assembled from D-lysergic acid and three different amino acids by the D-lysergyl-peptide-synthetases composed each of a monomudular and a trimodular nonribosomal peptide synthetase subunit. LpsB and lpsC encode the monomodular subunits responsible for D-lysergic acid activation and incorporation into the ergopeptine backbone. LpsA1 and A2 subunits encode the trimodular nonribosomal peptide synthetase assembling the tripeptide portion of ergopeptines. LpsA1 is responsible for formation of the major ergopeptine, ergotamine, and lpsA2 for alpha-ergocryptine, the minor ergopeptine of the total alkaloid mixture elaborated by C.purpurea. D-lysergyl-tripeptides are assembled by the nonribosomal peptide synthetases and released as N-(D-lysergyl-aminoacyl)-lactams. Cyclolization of the D-lysergyl-tripeptides is performed by the Fe(2+)/2-ketoglutarate-dependent dioxygenase easH which introduces a hydroxyl group into N-(D-lysergyl-aminoacyl)-lactam at alpha-C of the aminoacyl residue followed by spontaneous condensation with the terminal lactam carbonyl group. The protein is D-lysergyl-peptide-synthetase subunit 2 of Claviceps purpurea (Ergot fungus).